Reading from the N-terminus, the 500-residue chain is PLLVLDLIIQERGESFSHTVTAQHTSAKVEGLKAGTVYSVQVRARTVAGYGRYSNPVDFSTSLYVCPVSSSSTSMHLRRREELTTTTTGLKSREERFQKSDDPERSVQDLLPLIVGSASAGFVVILAMIVIAVVCLRRQRTGSELEYTEKLQQYVSPGVKVYIDPFTYEDPNEAVHEFAREIDISCVKIEEVIGAGEFGEVCRGRLKQAGRKETTVAIKTLKAGYTEHQRRDFLSEASIMGQFDHPNVIHLEGVLTRSCPVLIVTEFMENGALDSFLRLNDGRFTVTQLVGMLRGIAAGMKYLSDMNYVHRDLAARNVLVNSNLVCKVSDFGLSRFLDDNSSDPTYTSSLGGKIPIRWTAPEAIAFRKFTSASDVWSYGIVMWEVMSFGERPYWDMSNQDVMNAVEQDYRLPPPMDCPAVLHQLMLECWVKERNMRPRFGQIVSTLDKFLRNAASLKVLTSTHSGDLCRIGGTLPGHQRKSIGDAQDIKQQMSQTLPIRV.

Residues 1–64 (PLLVLDLIIQ…NPVDFSTSLY (64 aa)) form the Fibronectin type-III domain. Residues 1-113 (PLLVLDLIIQ…ERSVQDLLPL (113 aa)) are Extracellular-facing. Residues 76–103 (HLRRREELTTTTTGLKSREERFQKSDDP) are disordered. The span at 91–103 (KSREERFQKSDDP) shows a compositional bias: basic and acidic residues. The helical transmembrane segment at 114 to 134 (IVGSASAGFVVILAMIVIAVV) threads the bilayer. Residues 135-500 (CLRRQRTGSE…QMSQTLPIRV (366 aa)) lie on the Cytoplasmic side of the membrane. Y168 carries the post-translational modification Phosphotyrosine; by autocatalysis. A Protein kinase domain is found at 187–450 (VKIEEVIGAG…QIVSTLDKFL (264 aa)). Residues 193 to 201 (IGAGEFGEV) and K219 contribute to the ATP site. D312 serves as the catalytic Proton acceptor. Residues 421-500 (LHQLMLECWV…QMSQTLPIRV (80 aa)) form the SAM domain. Positions 498–500 (IRV) match the PDZ-binding motif.

Belongs to the protein kinase superfamily. Tyr protein kinase family. Ephrin receptor subfamily. In terms of assembly, heterotetramer upon binding of the ligand. The heterotetramer is composed of an ephrin dimer and a receptor dimer. Oligomerization is probably required to induce biological responses. Post-translationally, phosphorylated. Autophosphorylates upon ligand-binding. Autophosphorylation on Tyr-168 is required for interaction with SH2 domain-containing proteins. Widely expressed in the developing nervous system.

Its subcellular location is the cell membrane. The protein localises to the cell projection. It localises to the dendrite. It catalyses the reaction L-tyrosyl-[protein] + ATP = O-phospho-L-tyrosyl-[protein] + ADP + H(+). Receptor tyrosine kinase which binds promiscuously transmembrane ephrin-B family ligands residing on adjacent cells, leading to contact-dependent bidirectional signaling into neighboring cells. The signaling pathway downstream of the receptor is referred to as forward signaling while the signaling pathway downstream of the ephrin ligand is referred to as reverse signaling. Generally has an overlapping and redundant function with EPHB2. Like EPHB2, functions in axon guidance during development. In addition to its role in axon guidance also plays an important redundant role with other ephrin-B receptors in development and maturation of dendritic spines and the formation of excitatory synapses. May control other aspects of development through regulation of cell migration and positioning. May play a role in early pattern formation within the developing nervous system. This chain is Ephrin type-B receptor 3 (ephb3), found in Danio rerio (Zebrafish).